Consider the following 558-residue polypeptide: MARVEL domain-containing protein 2 (558 aa).

Residues 1-16 (MSNDGRSRNRDRRYDE) are compositionally biased toward basic and acidic residues. Disordered regions lie at residues 1-58 (MSND…PPFG) and 115-145 (CSPP…GTFS). Residues 1–194 (MSNDGRSRNR…YMKSWAGLLR (194 aa)) lie on the Cytoplasmic side of the membrane. Residues 45-58 (PLPPPPLPLQPPFG) show a composition bias toward pro residues. Residues serine 116, serine 120, and serine 161 each carry the phosphoserine modification. The residue at position 166 (threonine 166) is a Phosphothreonine. Positions 188–367 (SWAGLLRILG…SALVCLKLWR (180 aa)) constitute an MARVEL domain. The helical transmembrane segment at 195 to 215 (ILGVVELLLGAGVFACVTAYI) threads the bilayer. The Extracellular portion of the chain corresponds to 216–223 (HKDSEWYN). Residues 224 to 244 (LFGYSQPYGMGGVGGLGSMYG) traverse the membrane as a helical segment. Residues 245–254 (GYYYTGPKTP) lie on the Cytoplasmic side of the membrane. The chain crosses the membrane as a helical span at residues 255-275 (FVLVVAGLAWITTIIILVLGM). Topologically, residues 276–291 (SMYYRTILLDSNWWPL) are extracellular. The helical transmembrane segment at 292-312 (TEFGINVALFILYMAAAIVYV) threads the bilayer. Residues 313 to 319 (NDTNRGG) lie on the Cytoplasmic side of the membrane. The helical transmembrane segment at 320-337 (LCYYPLFNTPVNAVFCRV) threads the bilayer. The Extracellular segment spans residues 338 to 341 (EGGQ). A helical transmembrane segment spans residues 342 to 362 (IAAMIFLFVTMIVYLISALVC). The Cytoplasmic portion of the chain corresponds to 363-558 (LKLWRHEAAR…VMNWDVQGYS (196 aa)). Phosphoserine is present on serine 387. Residue lysine 412 forms a Glycyl lysine isopeptide (Lys-Gly) (interchain with G-Cter in ubiquitin) linkage. Residues 439–548 (MPDYVAKYPV…IKQRIQEYDK (110 aa)) adopt a coiled-coil conformation. One can recognise an OCEL domain in the interval 440 to 551 (PDYVAKYPVI…RIQEYDKVMN (112 aa)).

It belongs to the ELL/occludin family. In terms of assembly, interacts with TJP1. Interacts with the ubiquitin ligase ITCH. Interacts (via C-terminal cytoplasmic domain) with LSR (via the cytoplasmic domain), ILDR1 and ILDR2; the interaction is required to recruit MARVELD2 to tricellular contacts. Ubiquitinated by ITCH; but this ubiquitination does not lead to proteasomal degradation. Polyubiquitinated at Lys-412 via 'Lys-63'-linked ubiquitin chains; deubiquitinated by USP53. Post-translationally, phosphorylated.

The protein resides in the cell membrane. The protein localises to the cell junction. It is found in the tight junction. In terms of biological role, plays a role in the formation of tricellular tight junctions and of epithelial barriers. Required for normal hearing via its role in the separation of the endolymphatic and perilymphatic spaces of the organ of Corti in the inner ear, and for normal survival of hair cells in the organ of Corti. In Homo sapiens (Human), this protein is MARVEL domain-containing protein 2.